A 178-amino-acid chain; its full sequence is Cytidylate kinase 2 (178 aa).

7–15 (GKSGCGNTT) is an ATP binding site.

This sequence belongs to the cytidylate kinase family. Type 2 subfamily.

It localises to the cytoplasm. The catalysed reaction is CMP + ATP = CDP + ADP. The enzyme catalyses dCMP + ATP = dCDP + ADP. This chain is Cytidylate kinase 2, found in Borrelia garinii subsp. bavariensis (strain ATCC BAA-2496 / DSM 23469 / PBi) (Borreliella bavariensis).